A 125-amino-acid chain; its full sequence is Small ribosomal subunit protein eS8 (125 aa).

It belongs to the eukaryotic ribosomal protein eS8 family. As to quaternary structure, part of the 30S ribosomal subunit.

This Methanosarcina barkeri (strain Fusaro / DSM 804) protein is Small ribosomal subunit protein eS8.